The sequence spans 591 residues: Aspartate--tRNA(Asp/Asn) ligase (591 aa).

E176 provides a ligand contact to L-aspartate. The segment at 200–203 (QLFK) is aspartate. Position 222 (R222) interacts with L-aspartate. Residues 222-224 (RDE) and Q231 each bind ATP. L-aspartate is bound at residue H450. E484 contacts ATP. Position 491 (R491) interacts with L-aspartate. Residue 536-539 (GLDR) coordinates ATP.

Belongs to the class-II aminoacyl-tRNA synthetase family. Type 1 subfamily. As to quaternary structure, homodimer.

It localises to the cytoplasm. The enzyme catalyses tRNA(Asx) + L-aspartate + ATP = L-aspartyl-tRNA(Asx) + AMP + diphosphate. Functionally, aspartyl-tRNA synthetase with relaxed tRNA specificity since it is able to aspartylate not only its cognate tRNA(Asp) but also tRNA(Asn). Reaction proceeds in two steps: L-aspartate is first activated by ATP to form Asp-AMP and then transferred to the acceptor end of tRNA(Asp/Asn). The chain is Aspartate--tRNA(Asp/Asn) ligase from Bacillus cereus (strain ATCC 14579 / DSM 31 / CCUG 7414 / JCM 2152 / NBRC 15305 / NCIMB 9373 / NCTC 2599 / NRRL B-3711).